A 334-amino-acid polypeptide reads, in one-letter code: Aspartate carbamoyltransferase catalytic subunit (334 aa).

2 residues coordinate carbamoyl phosphate: Arg70 and Thr71. Lys98 is an L-aspartate binding site. Carbamoyl phosphate contacts are provided by Arg120, His150, and Gln153. Residues Arg183 and Arg239 each coordinate L-aspartate. The carbamoyl phosphate site is built by Gly280 and Pro281.

It belongs to the aspartate/ornithine carbamoyltransferase superfamily. ATCase family. As to quaternary structure, heterododecamer (2C3:3R2) of six catalytic PyrB chains organized as two trimers (C3), and six regulatory PyrI chains organized as three dimers (R2).

It carries out the reaction carbamoyl phosphate + L-aspartate = N-carbamoyl-L-aspartate + phosphate + H(+). The protein operates within pyrimidine metabolism; UMP biosynthesis via de novo pathway; (S)-dihydroorotate from bicarbonate: step 2/3. Functionally, catalyzes the condensation of carbamoyl phosphate and aspartate to form carbamoyl aspartate and inorganic phosphate, the committed step in the de novo pyrimidine nucleotide biosynthesis pathway. In Pseudomonas aeruginosa (strain LESB58), this protein is Aspartate carbamoyltransferase catalytic subunit.